The following is an 898-amino-acid chain: Protein translocase subunit SecA (898 aa).

Residues Gln87, Gly105–Thr109, and Asp512 contribute to the ATP site. Residues Met855–Ser865 show a composition bias toward polar residues. The tract at residues Met855–Tyr898 is disordered. Basic and acidic residues predominate over residues Leu866–Arg876. Positions 880, 882, 891, and 892 each coordinate Zn(2+). The span at Lys886 to Tyr898 shows a compositional bias: basic residues.

This sequence belongs to the SecA family. In terms of assembly, monomer and homodimer. Part of the essential Sec protein translocation apparatus which comprises SecA, SecYEG and auxiliary proteins SecDF-YajC and YidC. Requires Zn(2+) as cofactor.

Its subcellular location is the cell inner membrane. The protein localises to the cytoplasm. It catalyses the reaction ATP + H2O + cellular proteinSide 1 = ADP + phosphate + cellular proteinSide 2.. Part of the Sec protein translocase complex. Interacts with the SecYEG preprotein conducting channel. Has a central role in coupling the hydrolysis of ATP to the transfer of proteins into and across the cell membrane, serving both as a receptor for the preprotein-SecB complex and as an ATP-driven molecular motor driving the stepwise translocation of polypeptide chains across the membrane. This chain is Protein translocase subunit SecA, found in Histophilus somni (strain 129Pt) (Haemophilus somnus).